The primary structure comprises 134 residues: Small ribosomal subunit protein uS8c (134 aa).

It belongs to the universal ribosomal protein uS8 family. In terms of assembly, part of the 30S ribosomal subunit.

The protein localises to the plastid. The protein resides in the chloroplast. In terms of biological role, one of the primary rRNA binding proteins, it binds directly to 16S rRNA central domain where it helps coordinate assembly of the platform of the 30S subunit. This Lepidium virginicum (Virginia pepperweed) protein is Small ribosomal subunit protein uS8c (rps8).